Reading from the N-terminus, the 160-residue chain is Phosphopantetheine adenylyltransferase (160 aa).

Ser8 provides a ligand contact to substrate. Residues 8 to 9 (SF) and His16 contribute to the ATP site. Residues Lys40, Leu74, and Lys88 each coordinate substrate. Residues 89–91 (GLR), Glu99, and 124–130 (YSFVSST) contribute to the ATP site.

It belongs to the bacterial CoaD family. As to quaternary structure, homohexamer. Requires Mg(2+) as cofactor.

It is found in the cytoplasm. The catalysed reaction is (R)-4'-phosphopantetheine + ATP + H(+) = 3'-dephospho-CoA + diphosphate. The protein operates within cofactor biosynthesis; coenzyme A biosynthesis; CoA from (R)-pantothenate: step 4/5. Reversibly transfers an adenylyl group from ATP to 4'-phosphopantetheine, yielding dephospho-CoA (dPCoA) and pyrophosphate. The polypeptide is Phosphopantetheine adenylyltransferase (Thermus thermophilus (strain ATCC BAA-163 / DSM 7039 / HB27)).